A 505-amino-acid chain; its full sequence is UDP-N-acetylmuramate--L-alanine ligase (505 aa).

G164–T170 contacts ATP.

This sequence belongs to the MurCDEF family.

It localises to the cytoplasm. The catalysed reaction is UDP-N-acetyl-alpha-D-muramate + L-alanine + ATP = UDP-N-acetyl-alpha-D-muramoyl-L-alanine + ADP + phosphate + H(+). It participates in cell wall biogenesis; peptidoglycan biosynthesis. Functionally, cell wall formation. This is UDP-N-acetylmuramate--L-alanine ligase from Synechocystis sp. (strain ATCC 27184 / PCC 6803 / Kazusa).